Reading from the N-terminus, the 236-residue chain is 2,3,4,5-tetrahydropyridine-2,6-dicarboxylate N-acetyltransferase (236 aa).

This sequence belongs to the transferase hexapeptide repeat family. DapH subfamily.

It carries out the reaction (S)-2,3,4,5-tetrahydrodipicolinate + acetyl-CoA + H2O = L-2-acetamido-6-oxoheptanedioate + CoA. The protein operates within amino-acid biosynthesis; L-lysine biosynthesis via DAP pathway; LL-2,6-diaminopimelate from (S)-tetrahydrodipicolinate (acetylase route): step 1/3. Catalyzes the transfer of an acetyl group from acetyl-CoA to tetrahydrodipicolinate. This chain is 2,3,4,5-tetrahydropyridine-2,6-dicarboxylate N-acetyltransferase, found in Clostridium perfringens (strain ATCC 13124 / DSM 756 / JCM 1290 / NCIMB 6125 / NCTC 8237 / Type A).